Consider the following 420-residue polypeptide: L-rhamnose isomerase (420 aa).

His262, Asp294, and Asp296 together coordinate Mn(2+).

This sequence belongs to the rhamnose isomerase family. As to quaternary structure, homotetramer. It depends on Mn(2+) as a cofactor.

Its subcellular location is the cytoplasm. It catalyses the reaction L-rhamnopyranose = L-rhamnulose. Its pathway is carbohydrate degradation; L-rhamnose degradation; glycerone phosphate from L-rhamnose: step 1/3. Its function is as follows. Catalyzes the interconversion of L-rhamnose and L-rhamnulose. The polypeptide is L-rhamnose isomerase (Pectobacterium atrosepticum (strain SCRI 1043 / ATCC BAA-672) (Erwinia carotovora subsp. atroseptica)).